Reading from the N-terminus, the 388-residue chain is MDKLDANVSSKEGFGSVEKVVLLTFLSAVILMAILGNLLVMVAVCRDRQLRKIKTNYFIVSLAFADLLVSVLVMPFGAIELVQDIWVYGEMFCLVRTSLDVLLTTASIFHLCCISLDRYYAICCQPLVYRNKMTPLRIALMLGGCWVIPMFISFLPIMQGWNNIGIVDLIEKRKFNQNSNSTYCVFMVNKPYAITCSVVAFYIPFLLMVLAYYRIYVTAKEHARQIQVLQRAGAPAEGRPQPADQHSTHRMRTETKAAKTLCIIMGCFCLCWAPFFVTNIVDPFIDYTVPGQLWTAFLWLGYINSGLNPFLYAFLNKSFRRAFLIILCCDDERYRRPSILGQTVPCSTTTINGSTHVLRDTVECGGQWESQCHPAASSPLVAAQPIDT.

Residues 1–19 (MDKLDANVSSKEGFGSVEK) lie on the Extracellular side of the membrane. Residue asparagine 7 is glycosylated (N-linked (GlcNAc...) asparagine). A helical transmembrane segment spans residues 20-44 (VVLLTFLSAVILMAILGNLLVMVAV). Over 45–54 (CRDRQLRKIK) the chain is Cytoplasmic. Residues 55-78 (TNYFIVSLAFADLLVSVLVMPFGA) form a helical membrane-spanning segment. The Extracellular segment spans residues 79–92 (IELVQDIWVYGEMF). The helical transmembrane segment at 93-117 (CLVRTSLDVLLTTASIFHLCCISLD) threads the bilayer. Cysteine 93 and cysteine 184 are disulfide-bonded. Residue aspartate 100 coordinates serotonin. Over 118-133 (RYYAICCQPLVYRNKM) the chain is Cytoplasmic. Residues 134–157 (TPLRIALMLGGCWVIPMFISFLPI) traverse the membrane as a helical segment. Topologically, residues 158–188 (MQGWNNIGIVDLIEKRKFNQNSNSTYCVFMV) are extracellular. The helical transmembrane segment at 189-212 (NKPYAITCSVVAFYIPFLLMVLAY) threads the bilayer. Residues 213–257 (YRIYVTAKEHARQIQVLQRAGAPAEGRPQPADQHSTHRMRTETKA) are Cytoplasmic-facing. A helical membrane pass occupies residues 258-283 (AKTLCIIMGCFCLCWAPFFVTNIVDP). Position 279 (asparagine 279) interacts with serotonin. Over 284-290 (FIDYTVP) the chain is Extracellular. The helical transmembrane segment at 291 to 314 (GQLWTAFLWLGYINSGLNPFLYAF) threads the bilayer. Over 315 to 388 (LNKSFRRAFL…PLVAAQPIDT (74 aa)) the chain is Cytoplasmic.

Belongs to the G-protein coupled receptor 1 family. In terms of assembly, interacts (via C-terminus 330-346 AA) with GRK5; this interaction is promoted by 5-HT (serotonin).

It is found in the cell membrane. Its subcellular location is the endosome membrane. Functionally, G-protein coupled receptor for 5-hydroxytryptamine (serotonin), a biogenic hormone that functions as a neurotransmitter, a hormone and a mitogen. Ligand binding causes a conformation change that triggers signaling via guanine nucleotide-binding proteins (G proteins) and modulates the activity of downstream effectors. HTR4 is coupled to G(s) G alpha proteins and mediates activation of adenylate cyclase activity. The polypeptide is 5-hydroxytryptamine receptor 4 (HTR4) (Cavia porcellus (Guinea pig)).